Consider the following 176-residue polypeptide: PKHD-type hydroxylase Mfla_0096 (176 aa).

Residues 78 to 147 (KVFPPLFNRY…NQIARGTYGA (70 aa)) form the Fe2OG dioxygenase domain.

Fe(2+) serves as cofactor. L-ascorbate is required as a cofactor.

This Methylobacillus flagellatus (strain ATCC 51484 / DSM 6875 / VKM B-1610 / KT) protein is PKHD-type hydroxylase Mfla_0096.